We begin with the raw amino-acid sequence, 391 residues long: Large envelope protein (391 aa).

Position 1 is an N-acetylmethionine (Met1). Gly2 carries N-myristoyl glycine; by host lipidation. The segment at 2–108 (GLNQSTFNPL…PPLRDTHPQA (107 aa)) is pre-S1. The interval 2–163 (GLNQSTFNPL…FSTTGVPVST (162 aa)) is pre-S. Over 2–170 (GLNQSTFNPL…VSTMDITSSG (169 aa)) the chain is Virion surface; in external conformation. At 2-242 (GLNQSTFNPL…PGYRWMCLRR (241 aa)) the chain is on the intravirion; in internal conformation side. The segment at 73-107 (LSVTVPDTPPPPSTNRDKGRKPTPATPPLRDTHPQ) is disordered. Residues 109–163 (MTWNTSSFQSYLQNPKVRGLYFPAGGSTSSIVNPVPTTASTTSSSFSTTGVPVST) are pre-S2. The helical transmembrane segment at 171–191 (FLGPLLALQAVFFLLTKILTM) threads the bilayer. The Intravirion; in external conformation portion of the chain corresponds to 192-242 (PQSLDSLWTSLNFLGGTPACPGLNSQSPTSSHSPTCCPPTCPGYRWMCLRR). A helical membrane pass occupies residues 243-263 (SIIFLFILLLCLIFLLVLLDY). Topologically, residues 264–339 (QGMLPVCPLL…WALARFSWLN (76 aa)) are virion surface. Residue Asn311 is glycosylated (N-linked (GlcNAc...) asparagine; by host). The chain crosses the membrane as a helical span at residues 340-360 (SLLPFVQWFAGLSPTVWLLVI). The Intravirion segment spans residues 361–366 (WMMWFW). Residues 367–389 (GPSLFSILSPFLPLLPLFFWLWA) traverse the membrane as a helical segment. Over 390-391 (YI) the chain is Virion surface.

The protein belongs to the orthohepadnavirus major surface antigen family. In its internal form (Li-HBsAg), interacts with the capsid protein and with the isoform S. Interacts with host chaperone CANX. As to quaternary structure, associates with host chaperone CANX through its pre-S2 N glycan; this association may be essential for isoform M proper secretion. In terms of assembly, interacts with isoform L. Interacts with the antigens of satellite virus HDV (HDVAgs); this interaction is required for encapsidation of HDV genomic RNA. In terms of processing, isoform M is N-terminally acetylated by host at a ratio of 90%, and N-glycosylated by host at the pre-S2 region. Post-translationally, myristoylated.

It localises to the virion membrane. In terms of biological role, the large envelope protein exists in two topological conformations, one which is termed 'external' or Le-HBsAg and the other 'internal' or Li-HBsAg. In its external conformation the protein attaches the virus to cell receptors and thereby initiating infection. This interaction determines the species specificity and liver tropism. This attachment induces virion internalization predominantly through caveolin-mediated endocytosis. The large envelope protein also assures fusion between virion membrane and endosomal membrane. In its internal conformation the protein plays a role in virion morphogenesis and mediates the contact with the nucleocapsid like a matrix protein. Functionally, the middle envelope protein plays an important role in the budding of the virion. It is involved in the induction of budding in a nucleocapsid independent way. In this process the majority of envelope proteins bud to form subviral lipoprotein particles of 22 nm of diameter that do not contain a nucleocapsid. The chain is Large envelope protein from Woolly monkey hepatitis B virus (isolate Louisville) (WMHBV).